A 156-amino-acid chain; its full sequence is MLPVEHHVRIGQILIAENGEVLKTVLGSCVGIALVWRRQNKWALAHCLLPYPETFKEDKEARYVSQTIPRMLERMGATMADVSELEAIVAGGGRMMDGDKNYIKFVVGDENLKAAKAVLEKHRIRIVAFEPGGEQGTKMRIAGDGDYSIEKLPKTA.

Belongs to the CheD family.

The enzyme catalyses L-glutaminyl-[protein] + H2O = L-glutamyl-[protein] + NH4(+). Probably deamidates glutamine residues to glutamate on methyl-accepting chemotaxis receptors (MCPs), playing an important role in chemotaxis. The polypeptide is Probable chemoreceptor glutamine deamidase CheD (Bdellovibrio bacteriovorus (strain ATCC 15356 / DSM 50701 / NCIMB 9529 / HD100)).